The following is a 53-amino-acid chain: Large ribosomal subunit protein bL33A (53 aa).

The protein belongs to the bacterial ribosomal protein bL33 family.

The sequence is that of Large ribosomal subunit protein bL33A (rpmG1) from Mycoplasma pneumoniae (strain ATCC 29342 / M129 / Subtype 1) (Mycoplasmoides pneumoniae).